We begin with the raw amino-acid sequence, 497 residues long: Methionine--tRNA ligase (497 aa).

A 'HIGH' region motif is present at residues 14 to 24; that stretch reads YYVNDVPHLGH. The Zn(2+) site is built by Cys129, Cys132, Cys147, and His150. The short motif at 295–299 is the 'KMSKS' region element; the sequence is KMSKT. Residue Lys298 participates in ATP binding.

It belongs to the class-I aminoacyl-tRNA synthetase family. MetG type 2A subfamily. As to quaternary structure, monomer. The cofactor is Zn(2+).

It is found in the cytoplasm. It catalyses the reaction tRNA(Met) + L-methionine + ATP = L-methionyl-tRNA(Met) + AMP + diphosphate. Is required not only for elongation of protein synthesis but also for the initiation of all mRNA translation through initiator tRNA(fMet) aminoacylation. This is Methionine--tRNA ligase (metG) from Aquifex aeolicus (strain VF5).